A 434-amino-acid polypeptide reads, in one-letter code: Chaperone SurA (434 aa).

A signal peptide spans 1 to 20 (MKNWRTLILGLVICANTAFA). PpiC domains follow at residues 171–272 (DTEL…KVND) and 282–382 (VTEV…QLVD).

Its subcellular location is the periplasm. It carries out the reaction [protein]-peptidylproline (omega=180) = [protein]-peptidylproline (omega=0). Chaperone involved in the correct folding and assembly of outer membrane proteins. Recognizes specific patterns of aromatic residues and the orientation of their side chains, which are found more frequently in integral outer membrane proteins. May act in both early periplasmic and late outer membrane-associated steps of protein maturation. The sequence is that of Chaperone SurA from Yersinia pestis bv. Antiqua (strain Antiqua).